The following is an 85-amino-acid chain: Large ribosomal subunit protein bL31B (85 aa).

Belongs to the bacterial ribosomal protein bL31 family. Type B subfamily. In terms of assembly, part of the 50S ribosomal subunit.

This Macrococcus caseolyticus (strain JCSC5402) (Macrococcoides caseolyticum) protein is Large ribosomal subunit protein bL31B.